Here is a 339-residue protein sequence, read N- to C-terminus: Serpentine receptor class alpha-20 (339 aa).

A run of 6 helical transmembrane segments spans residues 30–50 (VSFVFLATVILLSYYFAVLAI), 113–132 (LYFYYLTNYFSTYSVFSLTF), 151–171 (VSISLLIIQLVFTLGTYYFGL), 199–219 (FRTTIMVFCIIVTIFIYYLNV), 249–269 (CILIVLQFVCISVSSFGVNYI), and 284–304 (IAPFVVGVTYANLCLPLVIYF).

It belongs to the nematode receptor-like protein sra family.

It localises to the membrane. The polypeptide is Serpentine receptor class alpha-20 (sra-20) (Caenorhabditis elegans).